The sequence spans 84 residues: U2-theraphotoxin-Cg1b 2 (84 aa).

The N-terminal stretch at 1–21 is a signal peptide; the sequence is MKVSVLITLAVLGVMFLLTSA. Residues 22 to 48 constitute a propeptide that is removed on maturation; sequence EERGSDQMDSPAWLKSMEIIFQSEERE. Disulfide bonds link cysteine 49-cysteine 63, cysteine 56-cysteine 68, and cysteine 62-cysteine 76.

This sequence belongs to the neurotoxin 10 (Hwtx-1) family. 06 (F4b) subfamily. In terms of tissue distribution, expressed by the venom gland.

It localises to the secreted. In terms of biological role, probable ion channel inhibitor. The sequence is that of U2-theraphotoxin-Cg1b 2 from Chilobrachys guangxiensis (Chinese earth tiger tarantula).